The following is a 280-amino-acid chain: L-aspartate dehydrogenase (280 aa).

Residues alanine 134 and asparagine 202 each contribute to the NAD(+) site. Residue histidine 232 is part of the active site.

The protein belongs to the L-aspartate dehydrogenase family.

The catalysed reaction is L-aspartate + NADP(+) + H2O = oxaloacetate + NH4(+) + NADPH + H(+). It carries out the reaction L-aspartate + NAD(+) + H2O = oxaloacetate + NH4(+) + NADH + H(+). It participates in cofactor biosynthesis; NAD(+) biosynthesis; iminoaspartate from L-aspartate (dehydrogenase route): step 1/1. Functionally, specifically catalyzes the NAD or NADP-dependent dehydrogenation of L-aspartate to iminoaspartate. This chain is L-aspartate dehydrogenase, found in Bradyrhizobium diazoefficiens (strain JCM 10833 / BCRC 13528 / IAM 13628 / NBRC 14792 / USDA 110).